We begin with the raw amino-acid sequence, 333 residues long: Ketol-acid reductoisomerase (NADP(+)) (333 aa).

In terms of domain architecture, KARI N-terminal Rossmann spans 2–182; it reads AKIYYDEDAS…GATRAGVIET (181 aa). NADP(+)-binding positions include 25–28, Ser-51, Ser-53, and 83–86; these read YGSQ and DTVQ. Residue His-108 is part of the active site. Gly-134 is an NADP(+) binding site. The KARI C-terminal knotted domain occupies 183-327; the sequence is TFKEETETDL…EELRKMMPWL (145 aa). Mg(2+)-binding residues include Asp-191, Glu-195, Glu-227, and Glu-231. Ser-252 provides a ligand contact to substrate.

The protein belongs to the ketol-acid reductoisomerase family. Mg(2+) serves as cofactor.

The enzyme catalyses (2R)-2,3-dihydroxy-3-methylbutanoate + NADP(+) = (2S)-2-acetolactate + NADPH + H(+). The catalysed reaction is (2R,3R)-2,3-dihydroxy-3-methylpentanoate + NADP(+) = (S)-2-ethyl-2-hydroxy-3-oxobutanoate + NADPH + H(+). Its pathway is amino-acid biosynthesis; L-isoleucine biosynthesis; L-isoleucine from 2-oxobutanoate: step 2/4. The protein operates within amino-acid biosynthesis; L-valine biosynthesis; L-valine from pyruvate: step 2/4. In terms of biological role, involved in the biosynthesis of branched-chain amino acids (BCAA). Catalyzes an alkyl-migration followed by a ketol-acid reduction of (S)-2-acetolactate (S2AL) to yield (R)-2,3-dihydroxy-isovalerate. In the isomerase reaction, S2AL is rearranged via a Mg-dependent methyl migration to produce 3-hydroxy-3-methyl-2-ketobutyrate (HMKB). In the reductase reaction, this 2-ketoacid undergoes a metal-dependent reduction by NADPH to yield (R)-2,3-dihydroxy-isovalerate. This Aquifex aeolicus (strain VF5) protein is Ketol-acid reductoisomerase (NADP(+)).